We begin with the raw amino-acid sequence, 403 residues long: Phosphopentomutase (403 aa).

6 residues coordinate Mn(2+): Asp13, Asp298, His303, Asp339, His340, and His351.

Belongs to the phosphopentomutase family. Mn(2+) serves as cofactor.

Its subcellular location is the cytoplasm. The catalysed reaction is 2-deoxy-alpha-D-ribose 1-phosphate = 2-deoxy-D-ribose 5-phosphate. It catalyses the reaction alpha-D-ribose 1-phosphate = D-ribose 5-phosphate. Its pathway is carbohydrate degradation; 2-deoxy-D-ribose 1-phosphate degradation; D-glyceraldehyde 3-phosphate and acetaldehyde from 2-deoxy-alpha-D-ribose 1-phosphate: step 1/2. Isomerase that catalyzes the conversion of deoxy-ribose 1-phosphate (dRib-1-P) and ribose 1-phosphate (Rib-1-P) to deoxy-ribose 5-phosphate (dRib-5-P) and ribose 5-phosphate (Rib-5-P), respectively. The chain is Phosphopentomutase from Streptococcus gordonii (strain Challis / ATCC 35105 / BCRC 15272 / CH1 / DL1 / V288).